A 1158-amino-acid chain; its full sequence is ATP-dependent helicase/deoxyribonuclease subunit B (1158 aa).

The UvrD-like helicase ATP-binding domain maps to 1 to 275; the sequence is MTLHAYLGRA…QYFNQLYRFN (275 aa). 8-15 is an ATP binding site; it reads GRAGTGKS. The 315-residue stretch at 269-583 folds into the UvrD-like helicase C-terminal domain; sequence NQLYRFNNQD…SIGTMDLAKV (315 aa). [4Fe-4S] cluster is bound by residues Cys784, Cys1112, Cys1115, and Cys1121.

The protein belongs to the helicase family. AddB/RexB type 1 subfamily. As to quaternary structure, heterodimer of AddA and AddB. It depends on Mg(2+) as a cofactor. The cofactor is [4Fe-4S] cluster.

In terms of biological role, the heterodimer acts as both an ATP-dependent DNA helicase and an ATP-dependent, dual-direction single-stranded exonuclease. Recognizes the chi site generating a DNA molecule suitable for the initiation of homologous recombination. The AddB subunit has 5' -&gt; 3' nuclease activity but not helicase activity. The sequence is that of ATP-dependent helicase/deoxyribonuclease subunit B from Staphylococcus aureus (strain MRSA252).